The chain runs to 118 residues: Beta-2-microglobulin (118 aa).

The signal sequence occupies residues 1 to 21 (MESRWGIVVIGLLCCVSWVEA). Residues 26–113 (PKIQVYTRSP…THNSVTKSVK (88 aa)) enclose the Ig-like C1-type domain. Cysteine 46 and cysteine 101 form a disulfide bridge.

Belongs to the beta-2-microglobulin family. As to quaternary structure, heterodimer of an alpha chain and a beta chain. Beta-2-microglobulin is the beta-chain of major histocompatibility complex class I molecules.

The protein resides in the secreted. In terms of biological role, component of the class I major histocompatibility complex (MHC). Involved in the presentation of peptide antigens to the immune system. The protein is Beta-2-microglobulin (B2M) of Tachyglossus aculeatus aculeatus (Southeast Australian short-beaked echidna).